Reading from the N-terminus, the 352-residue chain is Strictosidine synthase (352 aa).

Residues 1 to 31 form the signal peptide; it reads MANFSESKSMMAVFFMFFLLLLSSSSSSSSS. Residues Asn-95 and Asn-187 are each glycosylated (N-linked (GlcNAc...) asparagine).

The protein belongs to the strictosidine synthase family. As to quaternary structure, monomer.

The protein resides in the vacuole. It carries out the reaction 3alpha(S)-strictosidine + H2O = secologanin + tryptamine. It participates in alkaloid biosynthesis; 3alpha(S)-strictosidine biosynthesis; 3alpha(S)-strictosidine from secologanin and tryptamine: step 1/1. Catalyzes the stereospecific condensation of tryptamine with secologanin to form strictosidine, the key intermediate of indole alkaloid biosynthesis. The polypeptide is Strictosidine synthase (STR1) (Catharanthus roseus (Madagascar periwinkle)).